We begin with the raw amino-acid sequence, 137 residues long: NADPH-dependent 7-cyano-7-deazaguanine reductase (137 aa).

The active-site Thioimide intermediate is the C50. D57 acts as the Proton donor in catalysis. Substrate-binding positions include V72–L74 and H91–E92.

This sequence belongs to the GTP cyclohydrolase I family. QueF type 1 subfamily.

The protein localises to the cytoplasm. The enzyme catalyses 7-aminomethyl-7-carbaguanine + 2 NADP(+) = 7-cyano-7-deazaguanine + 2 NADPH + 3 H(+). It functions in the pathway tRNA modification; tRNA-queuosine biosynthesis. Catalyzes the NADPH-dependent reduction of 7-cyano-7-deazaguanine (preQ0) to 7-aminomethyl-7-deazaguanine (preQ1). This chain is NADPH-dependent 7-cyano-7-deazaguanine reductase, found in Synechocystis sp. (strain ATCC 27184 / PCC 6803 / Kazusa).